The following is a 299-amino-acid chain: Ribosomal RNA small subunit methyltransferase H (299 aa).

S-adenosyl-L-methionine contacts are provided by residues 35–37, Asp54, Tyr80, Asp101, and Gln108; that span reads GGH.

The protein belongs to the methyltransferase superfamily. RsmH family.

It localises to the cytoplasm. It carries out the reaction cytidine(1402) in 16S rRNA + S-adenosyl-L-methionine = N(4)-methylcytidine(1402) in 16S rRNA + S-adenosyl-L-homocysteine + H(+). Functionally, specifically methylates the N4 position of cytidine in position 1402 (C1402) of 16S rRNA. The chain is Ribosomal RNA small subunit methyltransferase H from Coprothermobacter proteolyticus (strain ATCC 35245 / DSM 5265 / OCM 4 / BT).